A 155-amino-acid polypeptide reads, in one-letter code: uncharacterized protein (155 aa).

The SCP domain occupies 37–140 (IAELRKKLNL…GGYRLKTTDN (104 aa)).

This is an uncharacterized protein from Borreliella burgdorferi (strain ATCC 35210 / DSM 4680 / CIP 102532 / B31) (Borrelia burgdorferi).